A 136-amino-acid polypeptide reads, in one-letter code: Large ribosomal subunit protein eL27 (136 aa).

This sequence belongs to the eukaryotic ribosomal protein eL27 family.

The sequence is that of Large ribosomal subunit protein eL27 (RPL27) from Candida albicans (Yeast).